The primary structure comprises 442 residues: Methionine aminopeptidase 2 (442 aa).

The disordered stretch occupies residues 1-81; that stretch reads MAAQAPTEAL…APTAQSDPPR (81 aa). Over residues 56–72 the composition is skewed to basic residues; the sequence is PLRRRRRRRRTRKKKKA. His196 lines the substrate pocket. Residues Asp216, Asp227, and His296 each contribute to the a divalent metal cation site. Residue His304 participates in substrate binding. 2 residues coordinate a divalent metal cation: Glu329 and Glu423.

This sequence belongs to the peptidase M24A family. Methionine aminopeptidase eukaryotic type 2 subfamily. The cofactor is Co(2+). Zn(2+) serves as cofactor. Mn(2+) is required as a cofactor. Requires Fe(2+) as cofactor.

The protein resides in the cytoplasm. The catalysed reaction is Release of N-terminal amino acids, preferentially methionine, from peptides and arylamides.. Cotranslationally removes the N-terminal methionine from nascent proteins. The N-terminal methionine is often cleaved when the second residue in the primary sequence is small and uncharged (Met-Ala-, Cys, Gly, Pro, Ser, Thr, or Val). The polypeptide is Methionine aminopeptidase 2 (Verticillium alfalfae (strain VaMs.102 / ATCC MYA-4576 / FGSC 10136) (Verticillium wilt of alfalfa)).